The following is a 195-amino-acid chain: ATP-dependent Clp protease proteolytic subunit (195 aa).

The active-site Nucleophile is Ser97. Residue His122 is part of the active site.

It belongs to the peptidase S14 family. Fourteen ClpP subunits assemble into 2 heptameric rings which stack back to back to give a disk-like structure with a central cavity, resembling the structure of eukaryotic proteasomes.

Its subcellular location is the cytoplasm. It catalyses the reaction Hydrolysis of proteins to small peptides in the presence of ATP and magnesium. alpha-casein is the usual test substrate. In the absence of ATP, only oligopeptides shorter than five residues are hydrolyzed (such as succinyl-Leu-Tyr-|-NHMec, and Leu-Tyr-Leu-|-Tyr-Trp, in which cleavage of the -Tyr-|-Leu- and -Tyr-|-Trp bonds also occurs).. Its function is as follows. Cleaves peptides in various proteins in a process that requires ATP hydrolysis. Has a chymotrypsin-like activity. Plays a major role in the degradation of misfolded proteins. This is ATP-dependent Clp protease proteolytic subunit from Lactobacillus acidophilus (strain ATCC 700396 / NCK56 / N2 / NCFM).